A 352-amino-acid chain; its full sequence is Ion-translocating oxidoreductase complex subunit D (352 aa).

Helical transmembrane passes span 20 to 40 (IMLL…WFFG), 42 to 62 (GTLV…ALVL), 78 to 109 (ALLT…VIIA), 123 to 143 (PAMI…TSWL), and 148 to 168 (IAVN…GHTA). Threonine 187 is subject to FMN phosphoryl threonine. A run of 4 helical transmembrane segments spans residues 214–234 (ILAG…GVWL), 242–262 (WHIP…GWLF), 267–287 (LAAP…FFIL), and 301–318 (LMFG…RSFG).

This sequence belongs to the NqrB/RnfD family. The complex is composed of six subunits: RsxA, RsxB, RsxC, RsxD, RsxE and RsxG. It depends on FMN as a cofactor.

It is found in the cell inner membrane. Its function is as follows. Part of a membrane-bound complex that couples electron transfer with translocation of ions across the membrane. Required to maintain the reduced state of SoxR. This Shigella flexneri serotype 5b (strain 8401) protein is Ion-translocating oxidoreductase complex subunit D.